We begin with the raw amino-acid sequence, 312 residues long: MAAQKINEGLEHLAKAEKYLKTGFLKWKPDYDSAASEYGKAAVAFKNAKQFEQAKDACLKEAVAHENNRALFHAAKAYEQAGMMLKEMQKLPEAVQLIEKASMMYLENGTPDTAAMALERAGKLIENVDPEKAVQLYQQTANVFENEERLRQAVELLGKASRLLVRGRRFDEAAISIQKEKNIYKEIENYPTCYKKTIAQVLVHLHRNDYVAAERCVRESYSIPGFNGSEDCAALEQLLEGYDQQDQDQVAEVCNSPLFKYMDNDYAKLGLSLVVPGGGVKKKAAAPPQAKPEGTAAPAAEEEEDEYAGGLC.

The segment at 281–312 (KKKAAAPPQAKPEGTAAPAAEEEEDEYAGGLC) is disordered. Positions 285–299 (AAPPQAKPEGTAAPA) are enriched in low complexity. Residues 300 to 312 (AEEEEDEYAGGLC) are compositionally biased toward acidic residues.

This sequence belongs to the SNAP family. Interacts with RAB11FIP5. Interacts with VTI1A.

Its subcellular location is the membrane. It localises to the golgi apparatus. In terms of biological role, required for vesicular transport between the endoplasmic reticulum and the Golgi apparatus. This Bos taurus (Bovine) protein is Gamma-soluble NSF attachment protein.